The chain runs to 324 residues: uncharacterized protein (324 aa).

Belongs to the mgp1/MG371 family.

This is an uncharacterized protein from Mycoplasma genitalium (strain ATCC 33530 / DSM 19775 / NCTC 10195 / G37) (Mycoplasmoides genitalium).